The sequence spans 159 residues: Small ribosomal subunit protein uS15 (159 aa).

Positions 1 to 16 are enriched in basic residues; it reads MNKRKEKGKSHSKRPV. The tract at residues 1-22 is disordered; the sequence is MNKRKEKGKSHSKRPVRNTPPR.

Belongs to the universal ribosomal protein uS15 family. Part of the 30S ribosomal subunit.

This Ignicoccus hospitalis (strain KIN4/I / DSM 18386 / JCM 14125) protein is Small ribosomal subunit protein uS15.